A 71-amino-acid chain; its full sequence is Protein Tlp homolog (71 aa).

A disordered region spans residues 30–56; it reads ETLQNNSLSRDQRQAIMEKNKRREESI. Over residues 39-56 the composition is skewed to basic and acidic residues; it reads RDQRQAIMEKNKRREESI.

The protein belongs to the Tlp family.

The polypeptide is Protein Tlp homolog (Desulforamulus reducens (strain ATCC BAA-1160 / DSM 100696 / MI-1) (Desulfotomaculum reducens)).